The primary structure comprises 141 residues: MSGNIGANPINNWNLLPLICLLSGCHFYRERFAERGFFYKVPDVLRDYLSAIPLEINEKARYKPGIANYHNIITCGFSTLLPYIRQQPLAMQQRFNLLFPDFVDHIQSPLPLASTLLERITFYAKKNRDELDKISCKWCCD.

This is an uncharacterized protein from Escherichia coli (strain K12).